The primary structure comprises 214 residues: MNIILLGPPGAGKGTQSQRLVERHGMRQLSTGDMLRAAVKAQTPVGLKAKAVMDRGELVSDDIVSELIDAELTAMHGNVGAIFDGYPRTAAQAGQLDVILAKHDRSLDKVIELEVNEEALVDRITGRFTCAKCGTGYHDRHKQPAREGVCDVCGSTEFKRRPDDNEETVRTRMQEYRAKTAPILPIYEERGLVERVDGMGGIDEVTAAIDALLK.

10–15 (GAGKGT) is an ATP binding site. An NMP region spans residues 30–59 (STGDMLRAAVKAQTPVGLKAKAVMDRGELV). AMP contacts are provided by residues Thr31, Arg36, 57–59 (ELV), 85–88 (GYPR), and Gln92. The LID stretch occupies residues 126 to 163 (GRFTCAKCGTGYHDRHKQPAREGVCDVCGSTEFKRRPD). Arg127 is a binding site for ATP. 4 residues coordinate Zn(2+): Cys130, Cys133, Cys150, and Cys153. AMP-binding residues include Arg160 and Arg172. Position 200 (Gly200) interacts with ATP.

Belongs to the adenylate kinase family. In terms of assembly, monomer.

The protein localises to the cytoplasm. The enzyme catalyses AMP + ATP = 2 ADP. It participates in purine metabolism; AMP biosynthesis via salvage pathway; AMP from ADP: step 1/1. Its function is as follows. Catalyzes the reversible transfer of the terminal phosphate group between ATP and AMP. Plays an important role in cellular energy homeostasis and in adenine nucleotide metabolism. The protein is Adenylate kinase of Erythrobacter litoralis (strain HTCC2594).